Here is a 411-residue protein sequence, read N- to C-terminus: MRIYTVGGAVRDRLLGLPVKDRDHVVVGSTPEAMVQLGYRPVGKDFPVFLHPVTHEEYALARTERKTGKGYKGFQVHADPEVTLEQDLARRDLTINAIAEDEHGNLIDPYHGVADLHAKVLRHVSPAFCEDPVRILRVARFAARFVEFSVADETMTLMRHMVEDGEVDALVPERVWQELAKGLMEQRPSRMFEVLRACGALKRLLPELDRLFGVPQTAKYHPEIDTGVHVMLVIDYAARAGFSLPVRFAALTHDLGKGTTPAHILPRHIGHEERSVELLQSLVKRLRVPNDCKDLALLVAKHHGKVHQVGEMKAATVLRFLQETDALRQPGRFRDFLSACEADARGRTGFEQQALPLFPLLLEILQLVRTVDAGAIAREQSSPDAIKEAVFSARVAAMEAAYRFPLKEAVG.

Gly-8 and Arg-11 together coordinate ATP. CTP contacts are provided by Gly-8 and Arg-11. Residues Asp-21 and Asp-23 each contribute to the Mg(2+) site. 3 residues coordinate ATP: Arg-91, Arg-137, and Arg-140. Arg-91, Arg-137, and Arg-140 together coordinate CTP. In terms of domain architecture, HD spans 226-327 (TGVHVMLVID…LRFLQETDAL (102 aa)).

Belongs to the tRNA nucleotidyltransferase/poly(A) polymerase family. Bacterial CCA-adding enzyme type 1 subfamily. In terms of assembly, monomer. Can also form homodimers and oligomers. Mg(2+) is required as a cofactor. The cofactor is Ni(2+).

It catalyses the reaction a tRNA precursor + 2 CTP + ATP = a tRNA with a 3' CCA end + 3 diphosphate. The catalysed reaction is a tRNA with a 3' CCA end + 2 CTP + ATP = a tRNA with a 3' CCACCA end + 3 diphosphate. Its function is as follows. Catalyzes the addition and repair of the essential 3'-terminal CCA sequence in tRNAs without using a nucleic acid template. Adds these three nucleotides in the order of C, C, and A to the tRNA nucleotide-73, using CTP and ATP as substrates and producing inorganic pyrophosphate. tRNA 3'-terminal CCA addition is required both for tRNA processing and repair. Also involved in tRNA surveillance by mediating tandem CCA addition to generate a CCACCA at the 3' terminus of unstable tRNAs. While stable tRNAs receive only 3'-terminal CCA, unstable tRNAs are marked with CCACCA and rapidly degraded. In Methylobacillus flagellatus (strain ATCC 51484 / DSM 6875 / VKM B-1610 / KT), this protein is Multifunctional CCA protein.